The primary structure comprises 405 residues: Riboflavin biosynthesis protein RibBA (405 aa).

Positions M1–K205 are DHBP synthase. D-ribulose 5-phosphate contacts are provided by residues R30–E31, D35, R144–T148, and E168. E31 serves as a coordination point for Mg(2+). Residue H147 coordinates Mg(2+). Residues Q206–K405 are GTP cyclohydrolase II. R256 to S260 contacts GTP. C261, C272, and C274 together coordinate Zn(2+). Residues Q277, E299–R301, and T321 contribute to the GTP site. The Proton acceptor; for GTP cyclohydrolase activity role is filled by D333. The active-site Nucleophile; for GTP cyclohydrolase activity is the R335. GTP-binding residues include T356 and K361.

This sequence in the N-terminal section; belongs to the DHBP synthase family. In the C-terminal section; belongs to the GTP cyclohydrolase II family. The cofactor is Mg(2+). Mn(2+) serves as cofactor. It depends on Zn(2+) as a cofactor.

It carries out the reaction D-ribulose 5-phosphate = (2S)-2-hydroxy-3-oxobutyl phosphate + formate + H(+). It catalyses the reaction GTP + 4 H2O = 2,5-diamino-6-hydroxy-4-(5-phosphoribosylamino)-pyrimidine + formate + 2 phosphate + 3 H(+). It functions in the pathway cofactor biosynthesis; riboflavin biosynthesis; 2-hydroxy-3-oxobutyl phosphate from D-ribulose 5-phosphate: step 1/1. It participates in cofactor biosynthesis; riboflavin biosynthesis; 5-amino-6-(D-ribitylamino)uracil from GTP: step 1/4. In terms of biological role, catalyzes the conversion of D-ribulose 5-phosphate to formate and 3,4-dihydroxy-2-butanone 4-phosphate. Catalyzes the conversion of GTP to 2,5-diamino-6-ribosylamino-4(3H)-pyrimidinone 5'-phosphate (DARP), formate and pyrophosphate. This Porphyromonas gingivalis (strain ATCC 33277 / DSM 20709 / CIP 103683 / JCM 12257 / NCTC 11834 / 2561) protein is Riboflavin biosynthesis protein RibBA.